Consider the following 421-residue polypeptide: UDP-N-acetylglucosamine 1-carboxyvinyltransferase (421 aa).

23–24 (KN) lines the phosphoenolpyruvate pocket. Arg92 contacts UDP-N-acetyl-alpha-D-glucosamine. Cys116 functions as the Proton donor in the catalytic mechanism. Cys116 carries the post-translational modification 2-(S-cysteinyl)pyruvic acid O-phosphothioketal. Residues 121-125 (RPVDL), 161-164 (KVSV), Asp306, and Ile328 each bind UDP-N-acetyl-alpha-D-glucosamine.

This sequence belongs to the EPSP synthase family. MurA subfamily.

The protein localises to the cytoplasm. It catalyses the reaction phosphoenolpyruvate + UDP-N-acetyl-alpha-D-glucosamine = UDP-N-acetyl-3-O-(1-carboxyvinyl)-alpha-D-glucosamine + phosphate. The protein operates within cell wall biogenesis; peptidoglycan biosynthesis. Cell wall formation. Adds enolpyruvyl to UDP-N-acetylglucosamine. This Vibrio vulnificus (strain CMCP6) protein is UDP-N-acetylglucosamine 1-carboxyvinyltransferase.